We begin with the raw amino-acid sequence, 341 residues long: Probable alcohol acetyltransferase (341 aa).

The transit peptide at 1–40 directs the protein to the mitochondrion; it reads MFASRILRNSAQTLKTELPHKETIKMAYDLHKPRSTAIRH. The region spanning 48–301 is the AB hydrolase-1 domain; sequence PILFLHGIFG…NSNHDILDQR (254 aa). Active-site charge relay system residues include S121, D145, and H295.

The protein belongs to the AB hydrolase superfamily.

The protein localises to the mitochondrion. Probable alcohol acetyltransferase that uses acetyl-CoA to synthesize acetate esters from various alcohols. Not involved in the synthesis of ethyl acetate. This Wickerhamomyces anomalus (strain ATCC 58044 / CBS 1984 / NCYC 433 / NRRL Y-366-8) (Yeast) protein is Probable alcohol acetyltransferase (EAT2).